A 91-amino-acid chain; its full sequence is Putative pterin-4-alpha-carbinolamine dehydratase (91 aa).

Belongs to the pterin-4-alpha-carbinolamine dehydratase family.

The enzyme catalyses (4aS,6R)-4a-hydroxy-L-erythro-5,6,7,8-tetrahydrobiopterin = (6R)-L-erythro-6,7-dihydrobiopterin + H2O. This chain is Putative pterin-4-alpha-carbinolamine dehydratase, found in Halobacterium salinarum (strain ATCC 29341 / DSM 671 / R1).